The primary structure comprises 229 residues: UPF0758 protein Ppro_3582 (229 aa).

Residues 1–20 are disordered; it reads MCPGIREWPEDERPREKMLR. Over residues 7–19 the composition is skewed to basic and acidic residues; sequence EWPEDERPREKML. In terms of domain architecture, MPN spans 107–229; that stretch reads RFTSPRQVFD…YLSFVERGVL (123 aa). Positions 178, 180, and 191 each coordinate Zn(2+). Residues 178-191 carry the JAMM motif motif; it reads HNHPTGDPTPSQED.

This sequence belongs to the UPF0758 family.

This is UPF0758 protein Ppro_3582 from Pelobacter propionicus (strain DSM 2379 / NBRC 103807 / OttBd1).